The following is a 295-amino-acid chain: Sperm acrosome membrane-associated protein 1 (295 aa).

A signal peptide spans 1–29 (MSPGGAGCSAGLLLTVGWLLLAGLQSTCG). At 30 to 220 (INVTAVQDPS…SRPDTDAVLV (191 aa)) the chain is on the extracellular side. Residues 39–71 (SLVSEGENEGEEEAENDSEVENEPQAEAEQDVS) form a disordered region. Residues 44–68 (GENEGEEEAENDSEVENEPQAEAEQ) show a composition bias toward acidic residues. N72 carries an N-linked (GlcNAc...) asparagine glycan. The chain crosses the membrane as a helical span at residues 221 to 241 (FVLTIGVIICIFVIFVLIFII). Over 242-295 (VNWATVKDFWASKASTTEIQSELSSMKYKDSTSLDQSPTEIPGHEDDALSEWNE) the chain is Cytoplasmic. A Phosphoserine modification is found at S256. Positions 263 to 295 (ELSSMKYKDSTSLDQSPTEIPGHEDDALSEWNE) are disordered. At Y269 the chain carries Phosphotyrosine. 2 positions are modified to phosphoserine: S278 and S291.

As to quaternary structure, interacts with CYLC1; the interaction may be relevant for proper acrosome attachment to the nuclear envelope. In terms of processing, N-glycosylated. As to expression, detected in spermatozoa (at protein level).

It localises to the cytoplasmic vesicle. The protein localises to the secretory vesicle. The protein resides in the acrosome inner membrane. Plays a role in acrosome expansion and establishment of normal sperm morphology during spermatogenesis. Important for male fertility. In Sus scrofa (Pig), this protein is Sperm acrosome membrane-associated protein 1.